We begin with the raw amino-acid sequence, 360 residues long: Phospho-N-acetylmuramoyl-pentapeptide-transferase (360 aa).

10 helical membrane passes run 27–47 (GAMITSALIVFLFGPTIINSL), 71–91 (TPTMGGLMIMTGILASCLLWA), 93–113 (LASVYVWVVLMVSVGFGAIGF), 128–148 (FSGKARLGIEFLIAAIAAFTI), 168–188 (LVINLSWFFIPFAAFVMVGAG), 199–219 (GLAIVPVMVAAASFGFIAYLS), 239–259 (LAVVLGAVIGAGLGFLWFNAP), 262–282 (AIFMGDTGSLALGGMLGTVAV), 288–308 (IVLAIIGGLFVMEALSVIIQV), and 337–357 (QVVIRFWIVAIILAMIGLSTL).

Belongs to the glycosyltransferase 4 family. MraY subfamily. It depends on Mg(2+) as a cofactor.

The protein resides in the cell inner membrane. The catalysed reaction is UDP-N-acetyl-alpha-D-muramoyl-L-alanyl-gamma-D-glutamyl-meso-2,6-diaminopimeloyl-D-alanyl-D-alanine + di-trans,octa-cis-undecaprenyl phosphate = di-trans,octa-cis-undecaprenyl diphospho-N-acetyl-alpha-D-muramoyl-L-alanyl-D-glutamyl-meso-2,6-diaminopimeloyl-D-alanyl-D-alanine + UMP. It functions in the pathway cell wall biogenesis; peptidoglycan biosynthesis. In terms of biological role, catalyzes the initial step of the lipid cycle reactions in the biosynthesis of the cell wall peptidoglycan: transfers peptidoglycan precursor phospho-MurNAc-pentapeptide from UDP-MurNAc-pentapeptide onto the lipid carrier undecaprenyl phosphate, yielding undecaprenyl-pyrophosphoryl-MurNAc-pentapeptide, known as lipid I. This is Phospho-N-acetylmuramoyl-pentapeptide-transferase from Brucella abortus (strain S19).